A 394-amino-acid chain; its full sequence is Probable acetyl-CoA acyltransferase (394 aa).

The active-site Acyl-thioester intermediate is Cys88. Catalysis depends on proton acceptor residues His349 and Cys378.

This sequence belongs to the thiolase-like superfamily. Thiolase family.

It is found in the cytoplasm. The catalysed reaction is 2 acetyl-CoA = acetoacetyl-CoA + CoA. This is Probable acetyl-CoA acyltransferase from Staphylococcus epidermidis (strain ATCC 35984 / DSM 28319 / BCRC 17069 / CCUG 31568 / BM 3577 / RP62A).